The primary structure comprises 160 residues: uncharacterized protein (160 aa).

Residues 1-27 (MVIGRKAGIIIYVMHALLLLLLSFTFA) form the signal peptide.

This is an uncharacterized protein from Aquifex aeolicus (strain VF5).